Here is a 77-residue protein sequence, read N- to C-terminus: UPF0401 protein c3666 (77 aa).

It belongs to the UPF0401 family.

The polypeptide is UPF0401 protein c3666 (Escherichia coli O6:H1 (strain CFT073 / ATCC 700928 / UPEC)).